The following is a 511-amino-acid chain: Phosphoenolpyruvate carboxylase (511 aa).

It belongs to the PEPCase type 2 family. In terms of assembly, homotetramer. The cofactor is Mg(2+).

It catalyses the reaction oxaloacetate + phosphate = phosphoenolpyruvate + hydrogencarbonate. Catalyzes the irreversible beta-carboxylation of phosphoenolpyruvate (PEP) to form oxaloacetate (OAA), a four-carbon dicarboxylic acid source for the tricarboxylic acid cycle. In Saccharolobus islandicus (strain Y.N.15.51 / Yellowstone #2) (Sulfolobus islandicus), this protein is Phosphoenolpyruvate carboxylase.